Consider the following 229-residue polypeptide: Complex I assembly factor TMEM126B, mitochondrial (229 aa).

A run of 4 helical transmembrane segments spans residues 71-91 (IRGT…ANLV), 109-129 (LTTL…TDAL), 140-160 (VLRS…ALAF), and 198-218 (VPLL…YAVC).

Part of the mitochondrial complex I assembly/MCIA complex that comprises at least the core subunits TMEM126B, NDUFAF1, ECSIT and ACAD9 and complement subunits such as COA1 and TMEM186. Associates with the intermediate 370 kDa subcomplex of incompletely assembled complex I. Interacts with TMEM70.

It localises to the mitochondrion membrane. Functionally, as part of the MCIA complex, involved in the assembly of the mitochondrial complex I. Participates in constructing the membrane arm of complex I. The sequence is that of Complex I assembly factor TMEM126B, mitochondrial from Rattus norvegicus (Rat).